A 525-amino-acid chain; its full sequence is GMP synthase [glutamine-hydrolyzing] (525 aa).

A Glutamine amidotransferase type-1 domain is found at 9–207 (RILILDFGSQ…VHEICGCPAD (199 aa)). The Nucleophile role is filled by C86. Catalysis depends on residues H181 and E183. The region spanning 208–400 (WTPGNIVDDL…LGLPADMVYR (193 aa)) is the GMPS ATP-PPase domain. Position 235–241 (235–241 (SGGVDSS)) interacts with ATP.

Homodimer.

It catalyses the reaction XMP + L-glutamine + ATP + H2O = GMP + L-glutamate + AMP + diphosphate + 2 H(+). The protein operates within purine metabolism; GMP biosynthesis; GMP from XMP (L-Gln route): step 1/1. In terms of biological role, catalyzes the synthesis of GMP from XMP. This chain is GMP synthase [glutamine-hydrolyzing], found in Alkalilimnicola ehrlichii (strain ATCC BAA-1101 / DSM 17681 / MLHE-1).